We begin with the raw amino-acid sequence, 480 residues long: Protein nucleotidyltransferase YdiU (480 aa).

ATP-binding residues include glycine 86, glycine 88, arginine 89, lysine 109, aspartate 121, glycine 122, arginine 172, and arginine 179. Catalysis depends on aspartate 248, which acts as the Proton acceptor. Mg(2+)-binding residues include asparagine 249 and aspartate 258. Position 258 (aspartate 258) interacts with ATP.

The protein belongs to the SELO family. Requires Mg(2+) as cofactor. It depends on Mn(2+) as a cofactor.

It catalyses the reaction L-seryl-[protein] + ATP = 3-O-(5'-adenylyl)-L-seryl-[protein] + diphosphate. The catalysed reaction is L-threonyl-[protein] + ATP = 3-O-(5'-adenylyl)-L-threonyl-[protein] + diphosphate. It carries out the reaction L-tyrosyl-[protein] + ATP = O-(5'-adenylyl)-L-tyrosyl-[protein] + diphosphate. The enzyme catalyses L-histidyl-[protein] + UTP = N(tele)-(5'-uridylyl)-L-histidyl-[protein] + diphosphate. It catalyses the reaction L-seryl-[protein] + UTP = O-(5'-uridylyl)-L-seryl-[protein] + diphosphate. The catalysed reaction is L-tyrosyl-[protein] + UTP = O-(5'-uridylyl)-L-tyrosyl-[protein] + diphosphate. In terms of biological role, nucleotidyltransferase involved in the post-translational modification of proteins. It can catalyze the addition of adenosine monophosphate (AMP) or uridine monophosphate (UMP) to a protein, resulting in modifications known as AMPylation and UMPylation. This is Protein nucleotidyltransferase YdiU from Klebsiella pneumoniae (strain 342).